A 502-amino-acid polypeptide reads, in one-letter code: C2H2-type transcription factor MSN2 (502 aa).

C2H2-type zinc fingers lie at residues 385-408 and 414-436; these read FVCHLCTRRFRRQEHLKRHFRSLH and FACGECGKKFSRSDNLTQHSRIH.

It is found in the nucleus. Functionally, key downstream transcription factor in the HOG1-MAPK pathway. Plays crucial roles in the regulation of growth, conidiation, trap development and fatty acid metabolism. Negatively regulates secondary metabolism such as arthrobotrisins biosynthesis.Also regulates autophagy and endocytosis. The chain is C2H2-type transcription factor MSN2 from Arthrobotrys oligospora (strain ATCC 24927 / CBS 115.81 / DSM 1491) (Nematode-trapping fungus).